A 228-amino-acid polypeptide reads, in one-letter code: Cutinase CUT1 (228 aa).

The first 16 residues, 1-16 (MQFITVALTLIALASA), serve as a signal peptide directing secretion. The cysteines at positions 49 and 127 are disulfide-linked. Ser-138 (nucleophile) is an active-site residue. Cysteines 189 and 196 form a disulfide. Asn-190 carries N-linked (GlcNAc...) asparagine glycosylation. The active site involves Asp-193. Catalysis depends on His-206, which acts as the Proton donor/acceptor.

Belongs to the cutinase family. Post-translationally, the 2 disulfide bonds play a critical role in holding the catalytic residues in juxta-position; reduction of the disulfide bridges results in the complete inactivation of the enzyme.

The protein localises to the secreted. The enzyme catalyses cutin + H2O = cutin monomers.. Catalyzes the hydrolysis of complex carboxylic polyesters found in the cell wall of plants. Degrades cutin, a macromolecule that forms the structure of the plant cuticle. Required for efficient penetration of the host plant cuticle by the appressorium during the initial stage of fungal infection. The chain is Cutinase CUT1 from Pyricularia oryzae (strain 70-15 / ATCC MYA-4617 / FGSC 8958) (Rice blast fungus).